The following is a 371-amino-acid chain: Anhydro-N-acetylmuramic acid kinase (371 aa).

Glycine 12 to aspartate 19 lines the ATP pocket.

Belongs to the anhydro-N-acetylmuramic acid kinase family.

The enzyme catalyses 1,6-anhydro-N-acetyl-beta-muramate + ATP + H2O = N-acetyl-D-muramate 6-phosphate + ADP + H(+). It participates in amino-sugar metabolism; 1,6-anhydro-N-acetylmuramate degradation. It functions in the pathway cell wall biogenesis; peptidoglycan recycling. Functionally, catalyzes the specific phosphorylation of 1,6-anhydro-N-acetylmuramic acid (anhMurNAc) with the simultaneous cleavage of the 1,6-anhydro ring, generating MurNAc-6-P. Is required for the utilization of anhMurNAc either imported from the medium or derived from its own cell wall murein, and thus plays a role in cell wall recycling. This Saccharophagus degradans (strain 2-40 / ATCC 43961 / DSM 17024) protein is Anhydro-N-acetylmuramic acid kinase.